The following is a 38-amino-acid chain: Photosystem II reaction center protein M (38 aa).

Residues 7-27 (GFVASILFVLVPSVFLIILYI) traverse the membrane as a helical segment.

The protein belongs to the PsbM family. PSII is composed of 1 copy each of membrane proteins PsbA, PsbB, PsbC, PsbD, PsbE, PsbF, PsbH, PsbI, PsbJ, PsbK, PsbL, PsbM, PsbT, PsbX, PsbY, PsbZ, Psb30/Ycf12, peripheral proteins PsbO, CyanoQ (PsbQ), PsbU, PsbV and a large number of cofactors. It forms dimeric complexes.

The protein resides in the cellular thylakoid membrane. In terms of biological role, one of the components of the core complex of photosystem II (PSII). PSII is a light-driven water:plastoquinone oxidoreductase that uses light energy to abstract electrons from H(2)O, generating O(2) and a proton gradient subsequently used for ATP formation. It consists of a core antenna complex that captures photons, and an electron transfer chain that converts photonic excitation into a charge separation. This subunit is found at the monomer-monomer interface. The sequence is that of Photosystem II reaction center protein M from Nostoc sp. (strain PCC 7120 / SAG 25.82 / UTEX 2576).